The chain runs to 215 residues: Urease accessory protein UreG (215 aa).

24 to 31 contacts GTP; sequence GPVGSGKT.

It belongs to the SIMIBI class G3E GTPase family. UreG subfamily. Homodimer. UreD, UreF and UreG form a complex that acts as a GTP-hydrolysis-dependent molecular chaperone, activating the urease apoprotein by helping to assemble the nickel containing metallocenter of UreC. The UreE protein probably delivers the nickel.

It localises to the cytoplasm. In terms of biological role, facilitates the functional incorporation of the urease nickel metallocenter. This process requires GTP hydrolysis, probably effectuated by UreG. This Burkholderia cenocepacia (strain HI2424) protein is Urease accessory protein UreG.